The chain runs to 447 residues: Probable glycine dehydrogenase (decarboxylating) subunit 1 (447 aa).

The protein belongs to the GcvP family. N-terminal subunit subfamily. As to quaternary structure, the glycine cleavage system is composed of four proteins: P, T, L and H. In this organism, the P 'protein' is a heterodimer of two subunits.

It catalyses the reaction N(6)-[(R)-lipoyl]-L-lysyl-[glycine-cleavage complex H protein] + glycine + H(+) = N(6)-[(R)-S(8)-aminomethyldihydrolipoyl]-L-lysyl-[glycine-cleavage complex H protein] + CO2. In terms of biological role, the glycine cleavage system catalyzes the degradation of glycine. The P protein binds the alpha-amino group of glycine through its pyridoxal phosphate cofactor; CO(2) is released and the remaining methylamine moiety is then transferred to the lipoamide cofactor of the H protein. This is Probable glycine dehydrogenase (decarboxylating) subunit 1 from Bacillus thuringiensis subsp. konkukian (strain 97-27).